A 309-amino-acid chain; its full sequence is Homoserine kinase (309 aa).

Position 91-101 (91-101) interacts with ATP; sequence PIGSGLGSSAC.

It belongs to the GHMP kinase family. Homoserine kinase subfamily.

The protein localises to the cytoplasm. The enzyme catalyses L-homoserine + ATP = O-phospho-L-homoserine + ADP + H(+). Its pathway is amino-acid biosynthesis; L-threonine biosynthesis; L-threonine from L-aspartate: step 4/5. Catalyzes the ATP-dependent phosphorylation of L-homoserine to L-homoserine phosphate. This Klebsiella pneumoniae (strain 342) protein is Homoserine kinase.